A 175-amino-acid polypeptide reads, in one-letter code: Dual-action ribosomal maturation protein DarP (175 aa).

Belongs to the DarP family.

It localises to the cytoplasm. Functionally, member of a network of 50S ribosomal subunit biogenesis factors which assembles along the 30S-50S interface, preventing incorrect 23S rRNA structures from forming. Promotes peptidyl transferase center (PTC) maturation. In Vibrio parahaemolyticus serotype O3:K6 (strain RIMD 2210633), this protein is Dual-action ribosomal maturation protein DarP.